Here is an 87-residue protein sequence, read N- to C-terminus: UPF0213 protein SSA_0709 (87 aa).

The 76-residue stretch at 3–78 (NKAYMYVLEC…KKKTRQAKLA (76 aa)) folds into the GIY-YIG domain.

Belongs to the UPF0213 family.

The protein is UPF0213 protein SSA_0709 of Streptococcus sanguinis (strain SK36).